We begin with the raw amino-acid sequence, 213 residues long: Large ribosomal subunit protein mL67 (213 aa).

Belongs to the mitochondrion-specific ribosomal protein mL67 family.

The protein resides in the nucleus. It is found in the mitochondrion. Functionally, transcription factor involved in regulation of RNA polymerase II-dependent transcription. Also involved in regulation of mitochondrial DNA recombination, maintenance and repair, and generation of homoplasmic cells. The protein is Large ribosomal subunit protein mL67 (MHR1) of Eremothecium gossypii (strain ATCC 10895 / CBS 109.51 / FGSC 9923 / NRRL Y-1056) (Yeast).